Reading from the N-terminus, the 85-residue chain is Large ribosomal subunit protein bL27 (85 aa).

Residues Met1–Gly22 are disordered.

This sequence belongs to the bacterial ribosomal protein bL27 family.

This chain is Large ribosomal subunit protein bL27, found in Anaeromyxobacter sp. (strain Fw109-5).